We begin with the raw amino-acid sequence, 466 residues long: tRNA(Ile)-lysidine synthase (466 aa).

An ATP-binding site is contributed by 42–47 (SGGVDS).

This sequence belongs to the tRNA(Ile)-lysidine synthase family.

The protein resides in the cytoplasm. The catalysed reaction is cytidine(34) in tRNA(Ile2) + L-lysine + ATP = lysidine(34) in tRNA(Ile2) + AMP + diphosphate + H(+). Its function is as follows. Ligates lysine onto the cytidine present at position 34 of the AUA codon-specific tRNA(Ile) that contains the anticodon CAU, in an ATP-dependent manner. Cytidine is converted to lysidine, thus changing the amino acid specificity of the tRNA from methionine to isoleucine. This is tRNA(Ile)-lysidine synthase from Anaplasma marginale (strain St. Maries).